The primary structure comprises 286 residues: Bifunctional protein FolD (286 aa).

NADP(+)-binding positions include 168-170 (GRG), threonine 195, and valine 236.

This sequence belongs to the tetrahydrofolate dehydrogenase/cyclohydrolase family. Homodimer.

The catalysed reaction is (6R)-5,10-methylene-5,6,7,8-tetrahydrofolate + NADP(+) = (6R)-5,10-methenyltetrahydrofolate + NADPH. It carries out the reaction (6R)-5,10-methenyltetrahydrofolate + H2O = (6R)-10-formyltetrahydrofolate + H(+). Its pathway is one-carbon metabolism; tetrahydrofolate interconversion. Its function is as follows. Catalyzes the oxidation of 5,10-methylenetetrahydrofolate to 5,10-methenyltetrahydrofolate and then the hydrolysis of 5,10-methenyltetrahydrofolate to 10-formyltetrahydrofolate. The polypeptide is Bifunctional protein FolD (Mycolicibacterium fortuitum (Mycobacterium fortuitum)).